A 500-amino-acid polypeptide reads, in one-letter code: Probable cytosol aminopeptidase (500 aa).

Mn(2+) is bound by residues lysine 265 and aspartate 270. The active site involves lysine 277. Aspartate 288, aspartate 347, and glutamate 349 together coordinate Mn(2+). Arginine 351 is an active-site residue.

This sequence belongs to the peptidase M17 family. Mn(2+) serves as cofactor.

It is found in the cytoplasm. The enzyme catalyses Release of an N-terminal amino acid, Xaa-|-Yaa-, in which Xaa is preferably Leu, but may be other amino acids including Pro although not Arg or Lys, and Yaa may be Pro. Amino acid amides and methyl esters are also readily hydrolyzed, but rates on arylamides are exceedingly low.. The catalysed reaction is Release of an N-terminal amino acid, preferentially leucine, but not glutamic or aspartic acids.. Functionally, presumably involved in the processing and regular turnover of intracellular proteins. Catalyzes the removal of unsubstituted N-terminal amino acids from various peptides. This is Probable cytosol aminopeptidase from Rickettsia typhi (strain ATCC VR-144 / Wilmington).